We begin with the raw amino-acid sequence, 1700 residues long: Rho guanine nucleotide exchange factor 28 (1700 aa).

Residues 288–343 (TEKATMPSGAAETEEEVRNLESGRSPSEEEEDAKSIKSQVDGPSEHEDQDRLPLDR) are disordered. Residues S312 and S314 each carry the phosphoserine modification. Basic and acidic residues predominate over residues 330–343 (PSEHEDQDRLPLDR). A Phosphoserine modification is found at S478. A disordered region spans residues 483–532 (VADSEGEGGSEPPICYAVGSQSSPRTGLPSGDELDSFETNTEPDCNISRT). Phosphoserine is present on S623. The Phorbol-ester/DAG-type zinc finger occupies 651 to 698 (RHQFVPGTFSGVLQCSGCDKTLLGKESLQCANCKANTHKGCKDAVPPC). A DH domain is found at 846–1041 (KRQDVIFELM…KDMIAAVDLK (196 aa)). The PH domain maps to 1095 to 1184 (ATGRFKDILA…NWMRRIQQAV (90 aa)). 2 disordered regions span residues 1184 to 1205 (VESC…RRKA) and 1289 to 1328 (KMGD…TEGT). The span at 1191-1205 (EGGRTSESDEERRKA) shows a compositional bias: basic and acidic residues. Residues 1292–1301 (DVSQSSEESP) form an interaction with PTK2/FAK1; required for regulation of axonal branching and synapse formation region. Polar residues predominate over residues 1309–1325 (TPSTQDVPASPTASLVT). The mediates cytoplasmic retention and interaction with YWHAH stretch occupies residues 1369-1380 (IIQAIQNLTRLL). Residues 1421–1522 (QEKSRYLEKQ…RERQKMRVQQ (102 aa)) adopt a coiled-coil conformation. An interaction with microtubules region spans residues 1421–1700 (QEKSRYLEKQ…DGAEENILYL (280 aa)). Residues 1493-1524 (QLQEYQQSLERLREGQRMVERERQKMRVQQGL) form an RNA-binding region. Residue S1535 is modified to Phosphoserine. Residues 1563–1576 (FINEAFGHMSLNTS) are mediates cytoplasmic retention and interaction with MAPK8IP1. Residues 1602 to 1700 (SESPTELKID…DGAEENILYL (99 aa)) are disordered. S1604 carries the phosphoserine modification. Positions 1647–1663 (DLDSFQSESSSPQDSNQ) are enriched in low complexity. Residues 1664 to 1675 (RGPQPQTLTTEA) show a composition bias toward polar residues.

Homooligomer; forms some cytoplasmic aggregates. Forms a complex with MAPK8 and MAPK8IP1. Interacts with RHOA. Interacts with microtubules. Interacts with YWHAE and YWHAH. Interacts with PTK2/FAK1. Interacts with NEFL. Interacts with CTNND2; prevents interaction with RHOA. Phosphorylated on tyrosine upon stimulation of cells by laminin. Highly enriched in the brain (at protein level). Also detected in lung and kidney.

It is found in the cytoplasm. Its subcellular location is the cell membrane. In terms of biological role, functions as a RHOA-specific guanine nucleotide exchange factor regulating signaling pathways downstream of integrins and growth factor receptors. Functions in axonal branching, synapse formation and dendritic morphogenesis. Also functions in focal adhesion formation, cell motility and B-lymphocytes activation. May regulate NEFL expression and aggregation and play a role in apoptosis. This chain is Rho guanine nucleotide exchange factor 28 (Arhgef28), found in Mus musculus (Mouse).